Consider the following 301-residue polypeptide: dTDP-4-dehydrorhamnose reductase (301 aa).

NADH contacts are provided by residues 10 to 12 (GQV), Asp30, 39 to 40 (DF), and 63 to 65 (AHT). Position 11-12 (11-12 (QV)) interacts with NADPH. Residues 39 to 40 (DF), 63 to 65 (AHT), and Tyr102 each bind NADPH. Position 104–105 (104–105 (TD)) interacts with dTDP-beta-L-rhamnose. NADH contacts are provided by Tyr129 and Lys133. Residues Tyr129 and Lys133 each contribute to the NADPH site. The active-site Proton donor/acceptor is Tyr129. Trp155 contributes to the dTDP-beta-L-rhamnose binding site.

The protein belongs to the dTDP-4-dehydrorhamnose reductase family. As to quaternary structure, homodimer. The cofactor is Mg(2+).

It carries out the reaction dTDP-beta-L-rhamnose + NADP(+) = dTDP-4-dehydro-beta-L-rhamnose + NADPH + H(+). It functions in the pathway carbohydrate biosynthesis; dTDP-L-rhamnose biosynthesis. The protein operates within bacterial outer membrane biogenesis; LPS O-antigen biosynthesis. Functionally, involved in the biosynthesis of the dTDP-L-rhamnose which is an important component of lipopolysaccharide (LPS). Catalyzes the reduction of dTDP-6-deoxy-L-lyxo-4-hexulose to yield dTDP-L-rhamnose. RmlD uses NADH and NADPH nearly equally well. This chain is dTDP-4-dehydrorhamnose reductase, found in Escherichia coli.